The sequence spans 565 residues: Oxygen-dependent choline dehydrogenase (565 aa).

An FAD-binding site is contributed by 7-36; that stretch reads DYIICGAGSAGNVLATRLTEDPGVTVLLLE. The active-site Proton acceptor is the histidine 474.

This sequence belongs to the GMC oxidoreductase family. Requires FAD as cofactor.

It carries out the reaction choline + A = betaine aldehyde + AH2. The enzyme catalyses betaine aldehyde + NAD(+) + H2O = glycine betaine + NADH + 2 H(+). It functions in the pathway amine and polyamine biosynthesis; betaine biosynthesis via choline pathway; betaine aldehyde from choline (cytochrome c reductase route): step 1/1. Involved in the biosynthesis of the osmoprotectant glycine betaine. Catalyzes the oxidation of choline to betaine aldehyde and betaine aldehyde to glycine betaine at the same rate. The polypeptide is Oxygen-dependent choline dehydrogenase (Burkholderia pseudomallei (strain K96243)).